The chain runs to 701 residues: Polyribonucleotide nucleotidyltransferase (701 aa).

Residues D490 and D496 each contribute to the Mg(2+) site. The KH domain maps to 557–616; that stretch reads PKVVTMSINPDKIRDVIGPGGKKINEIIDETGVKLDIEQDGTIFIGAVDQAMINRAKEII. Residues 626 to 694 form the S1 motif domain; sequence GQVYHAKVKR…KQGRVNASHK (69 aa).

This sequence belongs to the polyribonucleotide nucleotidyltransferase family. Mg(2+) serves as cofactor.

The protein localises to the cytoplasm. It catalyses the reaction RNA(n+1) + phosphate = RNA(n) + a ribonucleoside 5'-diphosphate. In terms of biological role, involved in mRNA degradation. Catalyzes the phosphorolysis of single-stranded polyribonucleotides processively in the 3'- to 5'-direction. This is Polyribonucleotide nucleotidyltransferase from Staphylococcus epidermidis (strain ATCC 12228 / FDA PCI 1200).